A 347-amino-acid chain; its full sequence is GMP reductase (347 aa).

NADP(+) is bound at residue 108 to 131 (ADFQKTKDIMAISDEFIFICIDIA). K(+) is bound by residues Gly-181 and Gly-183. Cys-186 acts as the Thioimidate intermediate in catalysis. 216–239 (IIGDGGCSCAGDVAKAFGGGADFV) provides a ligand contact to NADP(+).

The protein belongs to the IMPDH/GMPR family. GuaC type 1 subfamily. Homotetramer.

The enzyme catalyses IMP + NH4(+) + NADP(+) = GMP + NADPH + 2 H(+). In terms of biological role, catalyzes the irreversible NADPH-dependent deamination of GMP to IMP. It functions in the conversion of nucleobase, nucleoside and nucleotide derivatives of G to A nucleotides, and in maintaining the intracellular balance of A and G nucleotides. The polypeptide is GMP reductase (Vibrio campbellii (strain ATCC BAA-1116)).